The chain runs to 443 residues: Exodeoxyribonuclease 7 large subunit (443 aa).

Belongs to the XseA family. Heterooligomer composed of large and small subunits.

The protein resides in the cytoplasm. It catalyses the reaction Exonucleolytic cleavage in either 5'- to 3'- or 3'- to 5'-direction to yield nucleoside 5'-phosphates.. Functionally, bidirectionally degrades single-stranded DNA into large acid-insoluble oligonucleotides, which are then degraded further into small acid-soluble oligonucleotides. The polypeptide is Exodeoxyribonuclease 7 large subunit (Vibrio campbellii (strain ATCC BAA-1116)).